Consider the following 165-residue polypeptide: Ribosome maturation factor RimM (165 aa).

The PRC barrel domain maps to 89 to 161 (EADTHYIVDL…KIVVKPVRQW (73 aa)).

Belongs to the RimM family. Binds ribosomal protein uS19.

It localises to the cytoplasm. An accessory protein needed during the final step in the assembly of 30S ribosomal subunit, possibly for assembly of the head region. Essential for efficient processing of 16S rRNA. May be needed both before and after RbfA during the maturation of 16S rRNA. It has affinity for free ribosomal 30S subunits but not for 70S ribosomes. In Clostridium botulinum (strain Alaska E43 / Type E3), this protein is Ribosome maturation factor RimM.